The sequence spans 262 residues: LysM domain-containing protein ARB_03438 (262 aa).

Residues 1-22 (MVSIPLILGAIILLGTRKAATA) form the signal peptide. A LysM 1 domain is found at 31–75 (FAVTAATDDTCQSLGAQWGIGMAQFLKWNPGVNCNALVAGKTYCL). The interval 85–112 (TASLTPSPQVPTTSRATQTMTSKASTGT) is disordered. Over residues 86-112 (ASLTPSPQVPTTSRATQTMTSKASTGT) the composition is skewed to polar residues. A LysM 2 domain is found at 132–179 (FYHPVSPGDTCQSIVDRYKAFTLDQFYTWNPSVGKNCESLWLGYYVCT). The interval 184-240 (GPNSPSQQPPSQQPPSQQSPSQQSPSQQSPSQQPPSQQPPSQQPPSQQSNTSQQTQP) is disordered. Low complexity predominate over residues 197-214 (PPSQQSPSQQSPSQQSPS). Over residues 215–226 (QQPPSQQPPSQQ) the composition is skewed to pro residues. A compositionally biased stretch (low complexity) spans 227–240 (PPSQQSNTSQQTQP). N-linked (GlcNAc...) asparagine glycosylation occurs at N233.

It localises to the secreted. Functionally, might have a role in sequestration of chitin oligosaccharides (breakdown products of fungal cell walls that are released during invasion and act as triggers of host immunity) to dampen host defense. The sequence is that of LysM domain-containing protein ARB_03438 from Arthroderma benhamiae (strain ATCC MYA-4681 / CBS 112371) (Trichophyton mentagrophytes).